The following is a 122-amino-acid chain: Large ribosomal subunit protein uL14 (122 aa).

The protein belongs to the universal ribosomal protein uL14 family. As to quaternary structure, part of the 50S ribosomal subunit. Forms a cluster with proteins L3 and L19. In the 70S ribosome, L14 and L19 interact and together make contacts with the 16S rRNA in bridges B5 and B8.

In terms of biological role, binds to 23S rRNA. Forms part of two intersubunit bridges in the 70S ribosome. The protein is Large ribosomal subunit protein uL14 of Pseudomonas aeruginosa (strain LESB58).